The primary structure comprises 306 residues: Ribosomal protein L11 methyltransferase (306 aa).

Residues Thr154, Gly179, Asp201, and Asn242 each contribute to the S-adenosyl-L-methionine site.

It belongs to the methyltransferase superfamily. PrmA family.

Its subcellular location is the cytoplasm. It catalyses the reaction L-lysyl-[protein] + 3 S-adenosyl-L-methionine = N(6),N(6),N(6)-trimethyl-L-lysyl-[protein] + 3 S-adenosyl-L-homocysteine + 3 H(+). Its function is as follows. Methylates ribosomal protein L11. The chain is Ribosomal protein L11 methyltransferase from Xylella fastidiosa (strain 9a5c).